We begin with the raw amino-acid sequence, 318 residues long: NADH-ubiquinone oxidoreductase chain 1 (318 aa).

The next 8 membrane-spanning stretches (helical) occupy residues 2–22, 69–89, 100–120, 147–167, 171–191, 222–242, 253–273, and 294–314; these read PMINLLLLILPTLIAMAFLML, ALYIIAPTLALTIALLLWTPL, LGLLFILATSSLTVYSILWSG, AIILLSVLLMSGSFNLSTLIT, HIWLLLPTWPLAMMWFISTLA, LFFMAEYVNIIMMNALTTMIF, ELYTTCFTIKTLLLTSLFLWI, and LPLTLTLLMWYISLSTMIASI.

It belongs to the complex I subunit 1 family. Core subunit of respiratory chain NADH dehydrogenase (Complex I) which is composed of 45 different subunits.

It localises to the mitochondrion inner membrane. It carries out the reaction a ubiquinone + NADH + 5 H(+)(in) = a ubiquinol + NAD(+) + 4 H(+)(out). In terms of biological role, core subunit of the mitochondrial membrane respiratory chain NADH dehydrogenase (Complex I) which catalyzes electron transfer from NADH through the respiratory chain, using ubiquinone as an electron acceptor. Essential for the catalytic activity and assembly of complex I. This chain is NADH-ubiquinone oxidoreductase chain 1 (MT-ND1), found in Hylobates lar (Lar gibbon).